The sequence spans 387 residues: Succinate--CoA ligase [ADP-forming] subunit beta (387 aa).

Residues lysine 46, glycine 53–glycine 55, glutamate 99, cysteine 102, and glutamate 107 contribute to the ATP site. 2 residues coordinate Mg(2+): asparagine 196 and aspartate 210. Substrate-binding positions include asparagine 261 and glycine 318–valine 320.

This sequence belongs to the succinate/malate CoA ligase beta subunit family. As to quaternary structure, heterotetramer of two alpha and two beta subunits. Requires Mg(2+) as cofactor.

It carries out the reaction succinate + ATP + CoA = succinyl-CoA + ADP + phosphate. It catalyses the reaction GTP + succinate + CoA = succinyl-CoA + GDP + phosphate. Its pathway is carbohydrate metabolism; tricarboxylic acid cycle; succinate from succinyl-CoA (ligase route): step 1/1. Its function is as follows. Succinyl-CoA synthetase functions in the citric acid cycle (TCA), coupling the hydrolysis of succinyl-CoA to the synthesis of either ATP or GTP and thus represents the only step of substrate-level phosphorylation in the TCA. The beta subunit provides nucleotide specificity of the enzyme and binds the substrate succinate, while the binding sites for coenzyme A and phosphate are found in the alpha subunit. The sequence is that of Succinate--CoA ligase [ADP-forming] subunit beta from Campylobacter hominis (strain ATCC BAA-381 / DSM 21671 / CCUG 45161 / LMG 19568 / NCTC 13146 / CH001A).